Reading from the N-terminus, the 219-residue chain is MSIQVFCDFDGTITNNDNIMSIMEKFAPPEAEEVKNKILSQELSIQEGVSQLFQLIPTNLHDDIIQFLIETAEIRSGFHEFIQFVKENNISFYVISGGMDFFVYPLLQGIIPKEQIYCNETDFSAEFITVKWPHSCDDHCQNHCGLCKSSLIRKLSDTDDFHIVIGDSITDLQAAKQADKVFARDFLITKCEENHIAYTPFETFQDVQAELKLLLEVKA.

Belongs to the HAD-like hydrolase superfamily. MtnX family.

The catalysed reaction is 2-hydroxy-5-methylsulfanyl-3-oxopent-1-enyl phosphate + H2O = 1,2-dihydroxy-5-(methylsulfanyl)pent-1-en-3-one + phosphate. It participates in amino-acid biosynthesis; L-methionine biosynthesis via salvage pathway; L-methionine from S-methyl-5-thio-alpha-D-ribose 1-phosphate: step 4/6. Its function is as follows. Dephosphorylates 2-hydroxy-3-keto-5-methylthiopentenyl-1-phosphate (HK-MTPenyl-1-P) yielding 1,2-dihydroxy-3-keto-5-methylthiopentene (DHK-MTPene). This chain is 2-hydroxy-3-keto-5-methylthiopentenyl-1-phosphate phosphatase, found in Bacillus cereus (strain B4264).